Here is a 154-residue protein sequence, read N- to C-terminus: Ribosomal RNA large subunit methyltransferase H (154 aa).

Residues leucine 70, glycine 102, and 121–126 each bind S-adenosyl-L-methionine; that span reads LSRMTL.

This sequence belongs to the RNA methyltransferase RlmH family. As to quaternary structure, homodimer.

It is found in the cytoplasm. The catalysed reaction is pseudouridine(1915) in 23S rRNA + S-adenosyl-L-methionine = N(3)-methylpseudouridine(1915) in 23S rRNA + S-adenosyl-L-homocysteine + H(+). Specifically methylates the pseudouridine at position 1915 (m3Psi1915) in 23S rRNA. The chain is Ribosomal RNA large subunit methyltransferase H from Geobacter sp. (strain M21).